The primary structure comprises 550 residues: CTP synthase (550 aa).

Residues 1–266 (MNVNYIFVTG…DEYICKYFNL (266 aa)) are amidoligase domain. Serine 14 contacts CTP. Serine 14 is a UTP binding site. ATP contacts are provided by residues 15 to 20 (SLGKGI) and aspartate 72. Mg(2+) is bound by residues aspartate 72 and glutamate 140. Residues 147–149 (DIE), 187–192 (KTKPTQ), and lysine 223 each bind CTP. UTP is bound by residues 187–192 (KTKPTQ) and lysine 223. Residues 291-546 (TIGIVGKYIR…INAAIQYQCK (256 aa)) form the Glutamine amidotransferase type-1 domain. Position 353 (glycine 353) interacts with L-glutamine. Cysteine 380 functions as the Nucleophile; for glutamine hydrolysis in the catalytic mechanism. L-glutamine-binding positions include 381-384 (LGMQ), glutamate 404, and arginine 474. Catalysis depends on residues histidine 519 and glutamate 521.

Belongs to the CTP synthase family. In terms of assembly, homotetramer.

It carries out the reaction UTP + L-glutamine + ATP + H2O = CTP + L-glutamate + ADP + phosphate + 2 H(+). The catalysed reaction is L-glutamine + H2O = L-glutamate + NH4(+). It catalyses the reaction UTP + NH4(+) + ATP = CTP + ADP + phosphate + 2 H(+). It functions in the pathway pyrimidine metabolism; CTP biosynthesis via de novo pathway; CTP from UDP: step 2/2. With respect to regulation, allosterically activated by GTP, when glutamine is the substrate; GTP has no effect on the reaction when ammonia is the substrate. The allosteric effector GTP functions by stabilizing the protein conformation that binds the tetrahedral intermediate(s) formed during glutamine hydrolysis. Inhibited by the product CTP, via allosteric rather than competitive inhibition. Its function is as follows. Catalyzes the ATP-dependent amination of UTP to CTP with either L-glutamine or ammonia as the source of nitrogen. Regulates intracellular CTP levels through interactions with the four ribonucleotide triphosphates. This Blochmanniella floridana protein is CTP synthase.